We begin with the raw amino-acid sequence, 276 residues long: Bifunctional protein FolD (276 aa).

Residues Asn158–Ser160, Ser183, and Ile224 contribute to the NADP(+) site.

Belongs to the tetrahydrofolate dehydrogenase/cyclohydrolase family. Homodimer.

The enzyme catalyses (6R)-5,10-methylene-5,6,7,8-tetrahydrofolate + NADP(+) = (6R)-5,10-methenyltetrahydrofolate + NADPH. It carries out the reaction (6R)-5,10-methenyltetrahydrofolate + H2O = (6R)-10-formyltetrahydrofolate + H(+). The protein operates within one-carbon metabolism; tetrahydrofolate interconversion. Catalyzes the oxidation of 5,10-methylenetetrahydrofolate to 5,10-methenyltetrahydrofolate and then the hydrolysis of 5,10-methenyltetrahydrofolate to 10-formyltetrahydrofolate. The chain is Bifunctional protein FolD from Picrophilus torridus (strain ATCC 700027 / DSM 9790 / JCM 10055 / NBRC 100828 / KAW 2/3).